The sequence spans 349 residues: Phosphoribosylformylglycinamidine cyclo-ligase (349 aa).

Belongs to the AIR synthase family.

It is found in the cytoplasm. The enzyme catalyses 2-formamido-N(1)-(5-O-phospho-beta-D-ribosyl)acetamidine + ATP = 5-amino-1-(5-phospho-beta-D-ribosyl)imidazole + ADP + phosphate + H(+). It participates in purine metabolism; IMP biosynthesis via de novo pathway; 5-amino-1-(5-phospho-D-ribosyl)imidazole from N(2)-formyl-N(1)-(5-phospho-D-ribosyl)glycinamide: step 2/2. This is Phosphoribosylformylglycinamidine cyclo-ligase from Trichlorobacter lovleyi (strain ATCC BAA-1151 / DSM 17278 / SZ) (Geobacter lovleyi).